We begin with the raw amino-acid sequence, 401 residues long: Enoyl-[acyl-carrier-protein] reductase [NADH] (401 aa).

NAD(+) contacts are provided by residues 48-53 (GASSGY), 74-75 (FE), 111-112 (DA), and 140-141 (LA). Tyr226 contributes to the substrate binding site. The Proton donor role is filled by Tyr236. NAD(+) is bound by residues Lys245 and 274–276 (VVT).

This sequence belongs to the TER reductase family. As to quaternary structure, monomer.

It catalyses the reaction a 2,3-saturated acyl-[ACP] + NAD(+) = a (2E)-enoyl-[ACP] + NADH + H(+). It functions in the pathway lipid metabolism; fatty acid biosynthesis. Functionally, involved in the final reduction of the elongation cycle of fatty acid synthesis (FAS II). Catalyzes the reduction of a carbon-carbon double bond in an enoyl moiety that is covalently linked to an acyl carrier protein (ACP). The sequence is that of Enoyl-[acyl-carrier-protein] reductase [NADH] from Xylella fastidiosa (strain 9a5c).